The primary structure comprises 270 residues: Thiazole synthase (270 aa).

The Schiff-base intermediate with DXP role is filled by Lys-112. Residues Gly-173, 199–200, and 221–222 contribute to the 1-deoxy-D-xylulose 5-phosphate site; these read AG and NS.

Belongs to the ThiG family. Homotetramer. Forms heterodimers with either ThiH or ThiS.

Its subcellular location is the cytoplasm. The enzyme catalyses [ThiS sulfur-carrier protein]-C-terminal-Gly-aminoethanethioate + 2-iminoacetate + 1-deoxy-D-xylulose 5-phosphate = [ThiS sulfur-carrier protein]-C-terminal Gly-Gly + 2-[(2R,5Z)-2-carboxy-4-methylthiazol-5(2H)-ylidene]ethyl phosphate + 2 H2O + H(+). Its pathway is cofactor biosynthesis; thiamine diphosphate biosynthesis. Catalyzes the rearrangement of 1-deoxy-D-xylulose 5-phosphate (DXP) to produce the thiazole phosphate moiety of thiamine. Sulfur is provided by the thiocarboxylate moiety of the carrier protein ThiS. In vitro, sulfur can be provided by H(2)S. This Pseudomonas entomophila (strain L48) protein is Thiazole synthase.